The chain runs to 77 residues: Conotoxin S6.11 (77 aa).

The N-terminal stretch at methionine 1 to alanine 19 is a signal peptide. Residues leucine 20–glutamate 50 constitute a propeptide that is removed on maturation. 3 disulfide bridges follow: cysteine 51–cysteine 65, cysteine 58–cysteine 69, and cysteine 64–cysteine 74.

Belongs to the conotoxin O2 superfamily. Expressed by the venom duct.

It localises to the secreted. The sequence is that of Conotoxin S6.11 from Conus striatus (Striated cone).